The sequence spans 433 residues: Glutamate-1-semialdehyde 2,1-aminomutase (433 aa).

Residue lysine 269 is modified to N6-(pyridoxal phosphate)lysine.

This sequence belongs to the class-III pyridoxal-phosphate-dependent aminotransferase family. HemL subfamily. Homodimer. Requires pyridoxal 5'-phosphate as cofactor.

Its subcellular location is the cytoplasm. The catalysed reaction is (S)-4-amino-5-oxopentanoate = 5-aminolevulinate. It participates in porphyrin-containing compound metabolism; protoporphyrin-IX biosynthesis; 5-aminolevulinate from L-glutamyl-tRNA(Glu): step 2/2. In Francisella philomiragia subsp. philomiragia (strain ATCC 25017 / CCUG 19701 / FSC 153 / O#319-036), this protein is Glutamate-1-semialdehyde 2,1-aminomutase.